The chain runs to 475 residues: Pyruvate kinase (475 aa).

Substrate is bound at residue Arg-36. Residues Asn-38, Ser-40, and Asp-70 each coordinate K(+). 38-41 (NFSH) serves as a coordination point for ATP. Residues Arg-77 and Lys-158 each coordinate ATP. Residue Glu-223 participates in Mg(2+) binding. Residues Gly-246, Asp-247, and Thr-279 each contribute to the substrate site. Asp-247 is a Mg(2+) binding site.

This sequence belongs to the pyruvate kinase family. As to quaternary structure, homotetramer. It depends on a divalent metal cation as a cofactor.

It catalyses the reaction pyruvate + ATP = phosphoenolpyruvate + ADP + H(+). Its pathway is carbohydrate degradation; glycolysis; pyruvate from D-glyceraldehyde 3-phosphate: step 5/5. The polypeptide is Pyruvate kinase (pki) (Thermococcus litoralis (strain ATCC 51850 / DSM 5473 / JCM 8560 / NS-C)).